The primary structure comprises 290 residues: Shikimate dehydrogenase (NADP(+)) (290 aa).

Shikimate-binding positions include 18-20 and T66; that span reads SYS. The Proton acceptor role is filled by K70. E82 is an NADP(+) binding site. 2 residues coordinate shikimate: N91 and D106. Residues 130–134 and M229 contribute to the NADP(+) site; that span reads GSGGA. Residue Y231 participates in shikimate binding. G252 is a binding site for NADP(+).

The protein belongs to the shikimate dehydrogenase family. As to quaternary structure, homodimer.

The catalysed reaction is shikimate + NADP(+) = 3-dehydroshikimate + NADPH + H(+). Its pathway is metabolic intermediate biosynthesis; chorismate biosynthesis; chorismate from D-erythrose 4-phosphate and phosphoenolpyruvate: step 4/7. Its function is as follows. Involved in the biosynthesis of the chorismate, which leads to the biosynthesis of aromatic amino acids. Catalyzes the reversible NADPH linked reduction of 3-dehydroshikimate (DHSA) to yield shikimate (SA). The chain is Shikimate dehydrogenase (NADP(+)) from Chlorobium phaeovibrioides (strain DSM 265 / 1930) (Prosthecochloris vibrioformis (strain DSM 265)).